A 691-amino-acid chain; its full sequence is Calcium-binding and coiled-coil domain-containing protein 1 (691 aa).

The p300 KIX-binding stretch occupies residues 1–30 (MEESPLSRAPSRGGVNFLNVARTYIPNTKV). Residues 1 to 190 (MEESPLSRAP…VQELERALAT (190 aa)) are N-terminal AD (CTNNB1 binding site). Position 4 is a phosphoserine (serine 4). Positions 45–125 (SDWIGIFKVE…FQFREPRPMD (81 aa)) are interaction with GATA1. Coiled coils occupy residues 145-205 (KATV…YKGI), 232-339 (ELED…AELE), and 417-514 (QSVE…ADEK). The C-terminal AD (CTNNB1 binding site); interaction with CCAR1 stretch occupies residues 501–691 (RKLEARLEKV…FSTQDPFTFE (191 aa)). Residues 514–606 (KWNEDATTED…SEAEDEKSVL (93 aa)) are disordered. A UBZ1-type zinc finger spans residues 653–679 (WKECPICKERFPAESDKDALEDHMDGH). Zn(2+) is bound by residues cysteine 656, cysteine 659, histidine 675, and histidine 679.

Belongs to the CALCOCO family. As to quaternary structure, part of a calphoglin complex consisting of CALCOCO1, PPA1 and PGM. Interacts with the bHLH-PAS domains of GRIP1, AHR and ARNT. Interacts with CTNNB1 via both its N- and C-terminal regions. Interacts with EP300. Interacts with CCAR1 (via N-terminus) and GATA1.

The protein localises to the cytoplasm. It is found in the nucleus. In terms of biological role, functions as a coactivator for aryl hydrocarbon and nuclear receptors (NR). Recruited to promoters through its contact with the N-terminal basic helix-loop-helix-Per-Arnt-Sim (PAS) domain of transcription factors or coactivators, such as NCOA2. During ER-activation acts synergistically in combination with other NCOA2-binding proteins, such as EP300, CREBBP and CARM1. Involved in the transcriptional activation of target genes in the Wnt/CTNNB1 pathway. Functions as a secondary coactivator in LEF1-mediated transcriptional activation via its interaction with CTNNB1. Coactivator function for nuclear receptors and LEF1/CTNNB1 involves differential utilization of two different activation regions. In association with CCAR1 enhances GATA1- and MED1-mediated transcriptional activation from the gamma-globin promoter during erythroid differentiation of K562 erythroleukemia cells. Seems to enhance inorganic pyrophosphatase thus activating phosphogluomutase (PMG). Probably functions as a component of the calphoglin complex, which is involved in linking cellular metabolism (phosphate and glucose metabolism) with other core functions including protein synthesis and degradation, calcium signaling and cell growth. The sequence is that of Calcium-binding and coiled-coil domain-containing protein 1 (CALCOCO1) from Homo sapiens (Human).